The following is a 538-amino-acid chain: CTP synthase (538 aa).

Residues 1 to 266 (MKTKFIFVTG…DDQVVDKLNI (266 aa)) are amidoligase domain. CTP is bound at residue Ser14. Ser14 provides a ligand contact to UTP. Residues 15 to 20 (SIGKGL) and Asp72 contribute to the ATP site. 2 residues coordinate Mg(2+): Asp72 and Glu140. CTP-binding positions include 147 to 149 (DIE), 187 to 192 (KTKPTQ), and Lys223. Residues 187-192 (KTKPTQ) and Lys223 contribute to the UTP site. A Glutamine amidotransferase type-1 domain is found at 292–534 (HIAIVGKYVN…IAAALEHRGK (243 aa)). L-glutamine is bound at residue Gly354. Residue Cys381 is the Nucleophile; for glutamine hydrolysis of the active site. L-glutamine is bound by residues 382–385 (LGMQ), Glu405, and Arg462. Residues His507 and Glu509 contribute to the active site.

It belongs to the CTP synthase family. In terms of assembly, homotetramer.

It catalyses the reaction UTP + L-glutamine + ATP + H2O = CTP + L-glutamate + ADP + phosphate + 2 H(+). It carries out the reaction L-glutamine + H2O = L-glutamate + NH4(+). The catalysed reaction is UTP + NH4(+) + ATP = CTP + ADP + phosphate + 2 H(+). It functions in the pathway pyrimidine metabolism; CTP biosynthesis via de novo pathway; CTP from UDP: step 2/2. With respect to regulation, allosterically activated by GTP, when glutamine is the substrate; GTP has no effect on the reaction when ammonia is the substrate. The allosteric effector GTP functions by stabilizing the protein conformation that binds the tetrahedral intermediate(s) formed during glutamine hydrolysis. Inhibited by the product CTP, via allosteric rather than competitive inhibition. Its function is as follows. Catalyzes the ATP-dependent amination of UTP to CTP with either L-glutamine or ammonia as the source of nitrogen. Regulates intracellular CTP levels through interactions with the four ribonucleotide triphosphates. The polypeptide is CTP synthase (Geobacter metallireducens (strain ATCC 53774 / DSM 7210 / GS-15)).